Reading from the N-terminus, the 594-residue chain is Alanine--tRNA ligase (594 aa).

Positions 456, 460, 558, and 562 each coordinate Zn(2+).

It belongs to the class-II aminoacyl-tRNA synthetase family. Zn(2+) serves as cofactor.

It is found in the cytoplasm. It catalyses the reaction tRNA(Ala) + L-alanine + ATP = L-alanyl-tRNA(Ala) + AMP + diphosphate. Catalyzes the attachment of alanine to tRNA(Ala) in a two-step reaction: alanine is first activated by ATP to form Ala-AMP and then transferred to the acceptor end of tRNA(Ala). Also edits incorrectly charged Ser-tRNA(Ala) and Gly-tRNA(Ala) via its editing domain. The protein is Alanine--tRNA ligase (alaS) of Borreliella afzelii (strain PKo) (Borrelia afzelii).